Consider the following 230-residue polypeptide: Ribosomal RNA small subunit methyltransferase G (230 aa).

S-adenosyl-L-methionine is bound by residues Gly74, Phe79, 124-125, and Arg141; that span reads AE.

This sequence belongs to the methyltransferase superfamily. RNA methyltransferase RsmG family.

The protein localises to the cytoplasm. Its function is as follows. Specifically methylates the N7 position of a guanine in 16S rRNA. In Acholeplasma laidlawii (strain PG-8A), this protein is Ribosomal RNA small subunit methyltransferase G.